We begin with the raw amino-acid sequence, 21 residues long: Buforin-2 (21 aa).

At lysine 21 the chain carries N6-(2-hydroxyisobutyryl)lysine; alternate.

It belongs to the histone H2A family. In terms of tissue distribution, expressed by the skin glands.

It is found in the secreted. Functionally, antimicrobial peptide with potent activity against some Gram-positive and Gram-negative bacteria. Does not permeabilize membrane, but internalizes into bacterial cells and alter specific gene expression involved in bacterial resistance mechanisms. Has the ability to agglutinate E.coli, and lipid vesicles. Shows a weak hemolytic activity, and is not cytotoxic to monocytes. The protein is Buforin-2 of Sphaenorhynchus lacteus (Orinoco lime treefrog).